A 295-amino-acid chain; its full sequence is GTPase Era (295 aa).

Positions 5 to 172 (YCGYAAIIGR…EQAVHQLMPE (168 aa)) constitute an Era-type G domain. The segment at 13-20 (GRPNVGKS) is G1. Residue 13–20 (GRPNVGKS) participates in GTP binding. The segment at 39–43 (QTTRY) is G2. The interval 60 to 63 (DTPG) is G3. GTP contacts are provided by residues 60-64 (DTPGL) and 121-124 (NKVD). The G4 stretch occupies residues 121–124 (NKVD). The segment at 151-153 (LSA) is G5. Positions 203–279 (LGQEIPYSLA…FLQLWVKVKS (77 aa)) constitute a KH type-2 domain.

The protein belongs to the TRAFAC class TrmE-Era-EngA-EngB-Septin-like GTPase superfamily. Era GTPase family. Monomer.

The protein localises to the cytoplasm. The protein resides in the cell inner membrane. In terms of biological role, an essential GTPase that binds both GDP and GTP, with rapid nucleotide exchange. Plays a role in 16S rRNA processing and 30S ribosomal subunit biogenesis and possibly also in cell cycle regulation and energy metabolism. The sequence is that of GTPase Era from Coxiella burnetii (strain CbuK_Q154) (Coxiella burnetii (strain Q154)).